The sequence spans 245 residues: 1-(5-phosphoribosyl)-5-[(5-phosphoribosylamino)methylideneamino] imidazole-4-carboxamide isomerase (245 aa).

The active-site Proton acceptor is Asp-11. The active-site Proton donor is Asp-132.

This sequence belongs to the HisA/HisF family.

Its subcellular location is the cytoplasm. It carries out the reaction 1-(5-phospho-beta-D-ribosyl)-5-[(5-phospho-beta-D-ribosylamino)methylideneamino]imidazole-4-carboxamide = 5-[(5-phospho-1-deoxy-D-ribulos-1-ylimino)methylamino]-1-(5-phospho-beta-D-ribosyl)imidazole-4-carboxamide. It participates in amino-acid biosynthesis; L-histidine biosynthesis; L-histidine from 5-phospho-alpha-D-ribose 1-diphosphate: step 4/9. This is 1-(5-phosphoribosyl)-5-[(5-phosphoribosylamino)methylideneamino] imidazole-4-carboxamide isomerase from Bacillus pumilus (strain SAFR-032).